The following is a 96-amino-acid chain: Large ribosomal subunit protein uL23 (96 aa).

This sequence belongs to the universal ribosomal protein uL23 family. In terms of assembly, part of the 50S ribosomal subunit. Contacts protein L29, and trigger factor when it is bound to the ribosome.

Its function is as follows. One of the early assembly proteins it binds 23S rRNA. One of the proteins that surrounds the polypeptide exit tunnel on the outside of the ribosome. Forms the main docking site for trigger factor binding to the ribosome. The polypeptide is Large ribosomal subunit protein uL23 (Bacillus cereus (strain ATCC 10987 / NRS 248)).